The following is a 178-amino-acid chain: Translation initiation factor IF-3 (178 aa).

The interval 1–20 (MRRPFRATPVQKDGPRSNRD) is disordered.

This sequence belongs to the IF-3 family. As to quaternary structure, monomer.

Its subcellular location is the cytoplasm. IF-3 binds to the 30S ribosomal subunit and shifts the equilibrium between 70S ribosomes and their 50S and 30S subunits in favor of the free subunits, thus enhancing the availability of 30S subunits on which protein synthesis initiation begins. The polypeptide is Translation initiation factor IF-3 (Brucella abortus biovar 1 (strain 9-941)).